We begin with the raw amino-acid sequence, 392 residues long: Outer membrane protein assembly factor BamB (392 aa).

An N-terminal signal peptide occupies residues 1 to 19 (MQLRKLLLPGLLSVTLLSG). Residue cysteine 20 is the site of N-palmitoyl cysteine attachment. Residue cysteine 20 is the site of S-diacylglycerol cysteine attachment.

The protein belongs to the BamB family. In terms of assembly, part of the Bam complex, which is composed of the outer membrane protein BamA, and four lipoproteins BamB, BamC, BamD and BamE.

It is found in the cell outer membrane. Functionally, part of the outer membrane protein assembly complex, which is involved in assembly and insertion of beta-barrel proteins into the outer membrane. The polypeptide is Outer membrane protein assembly factor BamB (Salmonella typhimurium (strain LT2 / SGSC1412 / ATCC 700720)).